The following is a 457-amino-acid chain: Phosphomethylpyrimidine synthase (457 aa).

Substrate contacts are provided by residues Asn80, Met109, Tyr139, His175, 195-197 (SRG), 236-239 (DSLR), and Glu275. His279 contacts Zn(2+). Residue Tyr302 coordinates substrate. A Zn(2+)-binding site is contributed by His343. Residues Cys423, Cys426, and Cys431 each contribute to the [4Fe-4S] cluster site.

This sequence belongs to the ThiC family. It depends on [4Fe-4S] cluster as a cofactor.

The enzyme catalyses 5-amino-1-(5-phospho-beta-D-ribosyl)imidazole + S-adenosyl-L-methionine = 4-amino-2-methyl-5-(phosphooxymethyl)pyrimidine + CO + 5'-deoxyadenosine + formate + L-methionine + 3 H(+). It functions in the pathway cofactor biosynthesis; thiamine diphosphate biosynthesis. In terms of biological role, catalyzes the synthesis of the hydroxymethylpyrimidine phosphate (HMP-P) moiety of thiamine from aminoimidazole ribotide (AIR) in a radical S-adenosyl-L-methionine (SAM)-dependent reaction. The chain is Phosphomethylpyrimidine synthase from Nostoc punctiforme (strain ATCC 29133 / PCC 73102).